A 319-amino-acid chain; its full sequence is Ferrochelatase (319 aa).

Residues His193 and Glu274 each contribute to the Fe cation site.

This sequence belongs to the ferrochelatase family.

The protein resides in the cytoplasm. The enzyme catalyses heme b + 2 H(+) = protoporphyrin IX + Fe(2+). The protein operates within porphyrin-containing compound metabolism; protoheme biosynthesis; protoheme from protoporphyrin-IX: step 1/1. Catalyzes the ferrous insertion into protoporphyrin IX. This is Ferrochelatase from Erwinia tasmaniensis (strain DSM 17950 / CFBP 7177 / CIP 109463 / NCPPB 4357 / Et1/99).